The primary structure comprises 150 residues: 5-hydroxytryptamine receptor 1B (150 aa).

The Extracellular portion of the chain corresponds to Val1 to Thr83. Over residues Asp27 to Ser40 the composition is skewed to polar residues. The disordered stretch occupies residues Asp27–Gly50. The chain crosses the membrane as a helical span at residues Leu84–Met105. The Cytoplasmic portion of the chain corresponds to Pro106 to His115. The chain crosses the membrane as a helical span at residues Leu116–Thr138. Positions Asn133–Tyr137 match the NPxxY motif; important for ligand-induced conformation changes and signaling motif. Topologically, residues Met139–Lys150 are extracellular.

Belongs to the G-protein coupled receptor 1 family. In terms of assembly, homodimer. Heterodimer with HTR1D. In terms of processing, phosphorylated. Desensitization of the receptor may be mediated by its phosphorylation. Palmitoylated.

The protein resides in the cell membrane. Its function is as follows. G-protein coupled receptor for 5-hydroxytryptamine (serotonin). Also functions as a receptor for ergot alkaloid derivatives, various anxiolytic and antidepressant drugs and other psychoactive substances, such as lysergic acid diethylamide (LSD). Ligand binding causes a conformation change that triggers signaling via guanine nucleotide-binding proteins (G proteins) and modulates the activity of downstream effectors, such as adenylate cyclase. HTR1B is coupled to G(i)/G(o) G alpha proteins and mediates inhibitory neurotransmission by inhibiting adenylate cyclase activity. Arrestin family members inhibit signaling via G proteins and mediate activation of alternative signaling pathways. Regulates the release of 5-hydroxytryptamine, dopamine and acetylcholine in the brain, and thereby affects neural activity, nociceptive processing, pain perception, mood and behavior. Besides, plays a role in vasoconstriction of cerebral arteries. This chain is 5-hydroxytryptamine receptor 1B (HTR1B), found in Sus scrofa (Pig).